The chain runs to 117 residues: Large ribosomal subunit protein bL20 (117 aa).

This sequence belongs to the bacterial ribosomal protein bL20 family.

In terms of biological role, binds directly to 23S ribosomal RNA and is necessary for the in vitro assembly process of the 50S ribosomal subunit. It is not involved in the protein synthesizing functions of that subunit. This Leptospira borgpetersenii serovar Hardjo-bovis (strain JB197) protein is Large ribosomal subunit protein bL20.